The primary structure comprises 457 residues: Glutamate--tRNA ligase 1 (457 aa).

The short motif at 9–19 is the 'HIGH' region element; it reads PSPTGYIHIGN. The short motif at 250–254 is the 'KMSKS' region element; it reads GLSKR. Residue K253 participates in ATP binding.

Belongs to the class-I aminoacyl-tRNA synthetase family. Glutamate--tRNA ligase type 1 subfamily. Monomer.

It localises to the cytoplasm. The catalysed reaction is tRNA(Glu) + L-glutamate + ATP = L-glutamyl-tRNA(Glu) + AMP + diphosphate. Catalyzes the attachment of glutamate to tRNA(Glu) in a two-step reaction: glutamate is first activated by ATP to form Glu-AMP and then transferred to the acceptor end of tRNA(Glu). This is Glutamate--tRNA ligase 1 from Brucella canis (strain ATCC 23365 / NCTC 10854 / RM-666).